The primary structure comprises 357 residues: Sorbitol dehydrogenase 2 (357 aa).

Residue Cys43 coordinates Zn(2+). Tyr49 contributes to the substrate binding site. Zn(2+) is bound by residues His68 and Glu69. Glu154 provides a ligand contact to substrate. NAD(+)-binding positions include Asp202, Lys207, 275–277 (VGM), and 299–301 (CFR). Residues Arg301 and Tyr302 each contribute to the substrate site.

The protein belongs to the zinc-containing alcohol dehydrogenase family. In terms of assembly, homotetramer. Requires Zn(2+) as cofactor.

The enzyme catalyses keto-D-fructose + NADH + H(+) = D-sorbitol + NAD(+). It carries out the reaction xylitol + NAD(+) = D-xylulose + NADH + H(+). Functionally, polyol dehydrogenase that catalyzes the reversible NAD(+)-dependent oxidation of various sugar alcohols. Is active with D-sorbitol (D-glucitol) and xylitol as substrates, leading to the C2-oxidized product D-fructose and D-xylulose, respectively. The chain is Sorbitol dehydrogenase 2 (SOR2) from Saccharomyces cerevisiae (strain ATCC 204508 / S288c) (Baker's yeast).